The sequence spans 231 residues: Homeobox protein EMX1 (231 aa).

The segment at residues 133–192 (PKRIRTAFSPSQLLRLERAFEKNHYVVGAERKQLANSLSLSETQVKVWFQNRRTKYKRQK) is a DNA-binding region (homeobox). Residues 193 to 231 (LEEEGPECTQKKKGNHHINRWRIATKQTGSEDIDVMSDA) form a disordered region. Basic residues predominate over residues 203–212 (KKKGNHHINR).

This sequence belongs to the EMX homeobox family.

Its subcellular location is the nucleus. Functionally, may function in combinations with OTX1/2 to specify cell fates in the developing central nervous system. In Danio rerio (Zebrafish), this protein is Homeobox protein EMX1 (emx1).